We begin with the raw amino-acid sequence, 432 residues long: D-amino acid dehydrogenase 1 (432 aa).

Valine 3–tyrosine 17 serves as a coordination point for FAD. Residues glycine 410–histidine 432 form a disordered region.

Belongs to the DadA oxidoreductase family. FAD serves as cofactor.

It catalyses the reaction a D-alpha-amino acid + A + H2O = a 2-oxocarboxylate + AH2 + NH4(+). The protein operates within amino-acid degradation; D-alanine degradation; NH(3) and pyruvate from D-alanine: step 1/1. Catalyzes the oxidative deamination of D-amino acids. Has very broad substrate specificity; all the D-amino acids tested can be used as the substrate except D-Glu and D-Gln. Participates in the utilization of several D-amino acids as the sole source of nitrogen, i.e. D-alanine, D-histidine, D-phenylalanine, D-serine, D-threonine, and D-valine. The chain is D-amino acid dehydrogenase 1 (dadA1) from Pseudomonas aeruginosa (strain ATCC 15692 / DSM 22644 / CIP 104116 / JCM 14847 / LMG 12228 / 1C / PRS 101 / PAO1).